Here is a 671-residue protein sequence, read N- to C-terminus: DNA polymerase kappa (671 aa).

Residues 105–285 (WLHVDMDAFY…LPVRKIGGIG (181 aa)) enclose the UmuC domain. Mg(2+) contacts are provided by Asp109 and Asp200. Glu201 is an active-site residue. Residues 576–613 (YWIDGYKCVLCGIELPPSFVEERQEHSDFHLAQRLQNE) form a UBZ3-type zinc finger. Zn(2+)-binding residues include Cys583, Cys586, His601, and His605. The interval 607 to 671 (AQRLQNEETG…NQNSNETQRK (65 aa)) is disordered. The Nuclear localization signal motif lies at 625–632 (KRRILGKE). Over residues 629–650 (LGKEKVNSKPKKQKPDQKDSSK) the composition is skewed to basic and acidic residues. Polar residues predominate over residues 659-671 (TKSNQNSNETQRK).

The protein belongs to the DNA polymerase type-Y family. Mg(2+) serves as cofactor. In terms of tissue distribution, expressed in roots, leaves, stems, flowers and siliques. Present in endoreduplicating cells.

The protein resides in the nucleus. The catalysed reaction is DNA(n) + a 2'-deoxyribonucleoside 5'-triphosphate = DNA(n+1) + diphosphate. With respect to regulation, unable to bypass a single 1,N(6)-ethenoadenine (epsilon-dA) or an abasic site lesions in DNA templates. Its function is as follows. Template-directed low-fidelity DNA polymerase specifically involved in DNA repair. Able to extend primer-terminal mispairs, and to insert nucleotides opposite to a single 7,8-dihydro-8-oxoGuanine (8-oxoG) lesion and moderately extend from the resulting primer end, thus leading to both error-free and error-prone bypass of 8-oxoG DNA lesions. Probably involved in consecutive DNA replication cycles in the absence of mitosis. Binds preferentially template-primer DNA substrates or single-stranded DNA. Plays an important role in translesion synthesis, where the normal high-fidelity DNA polymerases cannot proceed and DNA synthesis stalls. Depending on the context, it inserts the correct base, but causes frequent base transitions, transversions and frameshifts. The polypeptide is DNA polymerase kappa (Arabidopsis thaliana (Mouse-ear cress)).